Consider the following 815-residue polypeptide: DNA gyrase subunit B (815 aa).

The disordered stretch occupies residues 1–21; the sequence is MEKTPATGSAVAPPPVEYGTD. One can recognise a Toprim domain in the interval 430-545; it reads SELYIVEGDS…AISTSRSRRS (116 aa). The Mg(2+) site is built by Glu-436, Asp-509, and Asp-511.

This sequence belongs to the type II topoisomerase GyrB family. Heterotetramer, composed of two GyrA and two GyrB chains. In the heterotetramer, GyrA contains the active site tyrosine that forms a transient covalent intermediate with DNA, while GyrB binds cofactors and catalyzes ATP hydrolysis. Requires Mg(2+) as cofactor. Mn(2+) serves as cofactor. The cofactor is Ca(2+).

It localises to the cytoplasm. The catalysed reaction is ATP-dependent breakage, passage and rejoining of double-stranded DNA.. Its function is as follows. A type II topoisomerase that negatively supercoils closed circular double-stranded (ds) DNA in an ATP-dependent manner to modulate DNA topology and maintain chromosomes in an underwound state. Negative supercoiling favors strand separation, and DNA replication, transcription, recombination and repair, all of which involve strand separation. Also able to catalyze the interconversion of other topological isomers of dsDNA rings, including catenanes and knotted rings. Type II topoisomerases break and join 2 DNA strands simultaneously in an ATP-dependent manner. The polypeptide is DNA gyrase subunit B (Myxococcus xanthus).